The following is a 120-amino-acid chain: NAD(P)H-quinone oxidoreductase subunit 3, chloroplastic (120 aa).

The next 3 membrane-spanning stretches (helical) occupy residues 10–30 (FWLFLLIASLIPVSAFSISKI), 64–84 (MFALVFVIFDVETVFLYPWAM), and 89–109 (LGISAFIEALIFVLILIIGLI).

It belongs to the complex I subunit 3 family. As to quaternary structure, NDH is composed of at least 16 different subunits, 5 of which are encoded in the nucleus.

It is found in the plastid. The protein localises to the chloroplast thylakoid membrane. The enzyme catalyses a plastoquinone + NADH + (n+1) H(+)(in) = a plastoquinol + NAD(+) + n H(+)(out). It carries out the reaction a plastoquinone + NADPH + (n+1) H(+)(in) = a plastoquinol + NADP(+) + n H(+)(out). In terms of biological role, NDH shuttles electrons from NAD(P)H:plastoquinone, via FMN and iron-sulfur (Fe-S) centers, to quinones in the photosynthetic chain and possibly in a chloroplast respiratory chain. The immediate electron acceptor for the enzyme in this species is believed to be plastoquinone. Couples the redox reaction to proton translocation, and thus conserves the redox energy in a proton gradient. This is NAD(P)H-quinone oxidoreductase subunit 3, chloroplastic from Angiopteris evecta (Mule's foot fern).